A 226-amino-acid polypeptide reads, in one-letter code: NADH-ubiquinone oxidoreductase chain 6 (226 aa).

5 helical membrane passes run Ser2–Leu22, Ile28–Val48, Ile56–Ile76, Tyr90–Thr110, and Ile169–Thr189.

It belongs to the complex I subunit 6 family.

Its subcellular location is the mitochondrion membrane. It carries out the reaction a ubiquinone + NADH + 5 H(+)(in) = a ubiquinol + NAD(+) + 4 H(+)(out). Its function is as follows. Core subunit of the mitochondrial membrane respiratory chain NADH dehydrogenase (Complex I) that is believed to belong to the minimal assembly required for catalysis. Complex I functions in the transfer of electrons from NADH to the respiratory chain. The immediate electron acceptor for the enzyme is believed to be ubiquinone. The sequence is that of NADH-ubiquinone oxidoreductase chain 6 (nad6) from Dictyostelium citrinum (Slime mold).